The sequence spans 294 residues: MIAPATLSSRLPLYLRLMRLDKPIGILLLMWPTLWALWLAADGFPPLHLIVIFALGTVLMRSAGCVINDYADRDFDGHVERTRTRPLTTGAVTVREALLLAAGLSLVSFVLILPLDPLVRWLSLPALFLAASYPYTKRFLAIPQAYLGIAFGFGIPMGFAAVQGEVPAIAWLLLLANIFWAVAYDTEYAMVDRPDDLKIGIKTSAITFGRFDVAAVMLCYAVAFGLIAAVGIATGRGPWFFGGIAIAAAIAIYHYTLIRDRDRARCFRAFLHNNWVGAVLFVALVIDYVAFPAA.

8 consecutive transmembrane segments (helical) span residues 24 to 44 (IGIL…ADGF), 47 to 67 (LHLI…GCVI), 99 to 119 (LLAA…DPLV), 139 to 159 (FLAI…PMGF), 164 to 184 (GEVP…AVAY), 213 to 233 (VAAV…VGIA), 238 to 258 (PWFF…YTLI), and 274 to 294 (NWVG…FPAA).

This sequence belongs to the UbiA prenyltransferase family. Mg(2+) is required as a cofactor.

The protein localises to the cell inner membrane. The catalysed reaction is all-trans-octaprenyl diphosphate + 4-hydroxybenzoate = 4-hydroxy-3-(all-trans-octaprenyl)benzoate + diphosphate. It participates in cofactor biosynthesis; ubiquinone biosynthesis. Functionally, catalyzes the prenylation of para-hydroxybenzoate (PHB) with an all-trans polyprenyl group. Mediates the second step in the final reaction sequence of ubiquinone-8 (UQ-8) biosynthesis, which is the condensation of the polyisoprenoid side chain with PHB, generating the first membrane-bound Q intermediate 3-octaprenyl-4-hydroxybenzoate. The protein is 4-hydroxybenzoate octaprenyltransferase of Aromatoleum aromaticum (strain DSM 19018 / LMG 30748 / EbN1) (Azoarcus sp. (strain EbN1)).